We begin with the raw amino-acid sequence, 143 residues long: Nucleoside diphosphate kinase (143 aa).

6 residues coordinate ATP: Lys11, Phe59, Arg87, Thr93, Arg104, and Asn114. His117 acts as the Pros-phosphohistidine intermediate in catalysis.

The protein belongs to the NDK family. As to quaternary structure, homotetramer. Requires Mg(2+) as cofactor.

The protein localises to the cytoplasm. The enzyme catalyses a 2'-deoxyribonucleoside 5'-diphosphate + ATP = a 2'-deoxyribonucleoside 5'-triphosphate + ADP. It carries out the reaction a ribonucleoside 5'-diphosphate + ATP = a ribonucleoside 5'-triphosphate + ADP. Its function is as follows. Major role in the synthesis of nucleoside triphosphates other than ATP. The ATP gamma phosphate is transferred to the NDP beta phosphate via a ping-pong mechanism, using a phosphorylated active-site intermediate. This Shewanella frigidimarina (strain NCIMB 400) protein is Nucleoside diphosphate kinase.